A 482-amino-acid polypeptide reads, in one-letter code: tRNA sulfurtransferase (482 aa).

A THUMP domain is found at 61-165; that stretch reads LAIRDALTRI…DDRLLLIKGR (105 aa). ATP-binding positions include 183 to 184, lysine 265, glycine 287, and glutamine 296; that span reads LI. Residues cysteine 344 and cysteine 456 are joined by a disulfide bond. Residues 404–482 form the Rhodanese domain; that stretch reads FGPNDVILDI…GFENVKAYRP (79 aa). The Cysteine persulfide intermediate role is filled by cysteine 456.

Belongs to the ThiI family.

Its subcellular location is the cytoplasm. The catalysed reaction is [ThiI sulfur-carrier protein]-S-sulfanyl-L-cysteine + a uridine in tRNA + 2 reduced [2Fe-2S]-[ferredoxin] + ATP + H(+) = [ThiI sulfur-carrier protein]-L-cysteine + a 4-thiouridine in tRNA + 2 oxidized [2Fe-2S]-[ferredoxin] + AMP + diphosphate. It carries out the reaction [ThiS sulfur-carrier protein]-C-terminal Gly-Gly-AMP + S-sulfanyl-L-cysteinyl-[cysteine desulfurase] + AH2 = [ThiS sulfur-carrier protein]-C-terminal-Gly-aminoethanethioate + L-cysteinyl-[cysteine desulfurase] + A + AMP + 2 H(+). It functions in the pathway cofactor biosynthesis; thiamine diphosphate biosynthesis. In terms of biological role, catalyzes the ATP-dependent transfer of a sulfur to tRNA to produce 4-thiouridine in position 8 of tRNAs, which functions as a near-UV photosensor. Also catalyzes the transfer of sulfur to the sulfur carrier protein ThiS, forming ThiS-thiocarboxylate. This is a step in the synthesis of thiazole, in the thiamine biosynthesis pathway. The sulfur is donated as persulfide by IscS. This chain is tRNA sulfurtransferase, found in Salmonella gallinarum (strain 287/91 / NCTC 13346).